The sequence spans 248 residues: MKIDVLTLFPEMFQSPFEESIFKRATDNNLVRLEIYNFRDFAHDKHHAVDDSPYGGGAGMLLKPEPLFEAVEDVLREDPTPAPIILLSPQGRSFNQEVARELAKHERLIIICGHYEGFDERVREHLATDEISIGDFVLTGGELAAMVVIDAVSRLIPGVLGSGESSQDDSHSNGLLEHPHYTRPPVFRGWGIPDVLLSGNHAQINRWRRKESLRRTLKRRPDMFEKIPLSKTDRKLVDEILAEENAQG.

S-adenosyl-L-methionine-binding positions include glycine 113 and 133–138 (IGDFVL).

This sequence belongs to the RNA methyltransferase TrmD family. In terms of assembly, homodimer.

Its subcellular location is the cytoplasm. It carries out the reaction guanosine(37) in tRNA + S-adenosyl-L-methionine = N(1)-methylguanosine(37) in tRNA + S-adenosyl-L-homocysteine + H(+). Its function is as follows. Specifically methylates guanosine-37 in various tRNAs. This chain is tRNA (guanine-N(1)-)-methyltransferase, found in Dehalococcoides mccartyi (strain CBDB1).